The primary structure comprises 183 residues: Tumor necrosis factor ligand superfamily member 4 (183 aa).

Residues 1-23 (MERVQPLEENVGNAARPRFERNK) lie on the Cytoplasmic side of the membrane. The chain crosses the membrane as a helical; Signal-anchor for type II membrane protein span at residues 24–50 (LLLVASVIQGLGLLLCFTYICLHFSAL). Residues 51–173 (QVSHRYPRIQ…HVNGGELILI (123 aa)) enclose the THD domain. Residues 51 to 183 (QVSHRYPRIQ…HQNPGEFCVL (133 aa)) lie on the Extracellular side of the membrane. N-linked (GlcNAc...) asparagine glycans are attached at residues N90, N114, N152, and N157. Residues C97 and C181 are joined by a disulfide bond.

Belongs to the tumor necrosis factor family. Homotrimer.

Its subcellular location is the membrane. Its function is as follows. Cytokine that binds to TNFRSF4. Co-stimulates T-cell proliferation and cytokine production. This chain is Tumor necrosis factor ligand superfamily member 4 (TNFSF4), found in Homo sapiens (Human).